A 21-amino-acid chain; its full sequence is Brevinin-1OKb (21 aa).

At Lys21 the chain carries Lysine amide.

Expressed by the skin glands.

Its subcellular location is the secreted. Its function is as follows. Antimicrobial peptide. In Nidirana okinavana (Kampira Falls frog), this protein is Brevinin-1OKb.